Reading from the N-terminus, the 90-residue chain is Phosphoribosyl-ATP pyrophosphatase (90 aa).

Belongs to the PRA-PH family.

The protein resides in the cytoplasm. The catalysed reaction is 1-(5-phospho-beta-D-ribosyl)-ATP + H2O = 1-(5-phospho-beta-D-ribosyl)-5'-AMP + diphosphate + H(+). Its pathway is amino-acid biosynthesis; L-histidine biosynthesis; L-histidine from 5-phospho-alpha-D-ribose 1-diphosphate: step 2/9. The sequence is that of Phosphoribosyl-ATP pyrophosphatase (hisE) from Streptomyces coelicolor (strain ATCC BAA-471 / A3(2) / M145).